A 36-amino-acid polypeptide reads, in one-letter code: Esculentin-2R (36 aa).

The cysteines at positions 30 and 36 are disulfide-linked.

In terms of tissue distribution, expressed by the skin glands.

Its subcellular location is the secreted. Its function is as follows. Antimicrobial peptide. This chain is Esculentin-2R, found in Pelophylax ridibundus (Marsh frog).